Reading from the N-terminus, the 149-residue chain is Ribonuclease pancreatic (149 aa).

The signal sequence occupies residues 1 to 25 (MGLEKSLILFPLLVLVLGWVQPSLA). Lys32 and Arg35 together coordinate substrate. Residue His37 is the Proton acceptor of the active site. Cystine bridges form between Cys51–Cys109, Cys65–Cys120, Cys83–Cys135, and Cys90–Cys97. Residues 66 to 70 (KPVNT), Lys91, and Arg110 each bind substrate. The active-site Proton donor is the His144.

Belongs to the pancreatic ribonuclease family. Monomer. Interacts with and forms tight 1:1 complexes with RNH1. Dimerization of two such complexes may occur. Interaction with RNH1 inhibits this protein. As to expression, pancreas.

Its subcellular location is the secreted. The enzyme catalyses an [RNA] containing cytidine + H2O = an [RNA]-3'-cytidine-3'-phosphate + a 5'-hydroxy-ribonucleotide-3'-[RNA].. The catalysed reaction is an [RNA] containing uridine + H2O = an [RNA]-3'-uridine-3'-phosphate + a 5'-hydroxy-ribonucleotide-3'-[RNA].. Functionally, endonuclease that catalyzes the cleavage of RNA on the 3' side of pyrimidine nucleotides. Acts on single-stranded and double-stranded RNA. The polypeptide is Ribonuclease pancreatic (RNASE1) (Uranomys ruddi (White-bellied brush-furred rat)).